Here is a 343-residue protein sequence, read N- to C-terminus: Ribosomal RNA small subunit methyltransferase C (343 aa).

This sequence belongs to the methyltransferase superfamily. RsmC family. As to quaternary structure, monomer.

The protein resides in the cytoplasm. The enzyme catalyses guanosine(1207) in 16S rRNA + S-adenosyl-L-methionine = N(2)-methylguanosine(1207) in 16S rRNA + S-adenosyl-L-homocysteine + H(+). Functionally, specifically methylates the guanine in position 1207 of 16S rRNA in the 30S particle. The protein is Ribosomal RNA small subunit methyltransferase C of Escherichia coli O1:K1 / APEC.